Here is a 361-residue protein sequence, read N- to C-terminus: Phosphate acyltransferase (361 aa).

It belongs to the PlsX family. As to quaternary structure, homodimer. Probably interacts with PlsY.

Its subcellular location is the cytoplasm. It catalyses the reaction a fatty acyl-[ACP] + phosphate = an acyl phosphate + holo-[ACP]. Its pathway is lipid metabolism; phospholipid metabolism. Catalyzes the reversible formation of acyl-phosphate (acyl-PO(4)) from acyl-[acyl-carrier-protein] (acyl-ACP). This enzyme utilizes acyl-ACP as fatty acyl donor, but not acyl-CoA. In Anaeromyxobacter dehalogenans (strain 2CP-C), this protein is Phosphate acyltransferase.